The primary structure comprises 360 residues: MTVTALGVPTVRGRSEGSAVASDAPGDGPLLDRFGRSATDLRVSLTDRCNLRCGYCMPAEGLNWLPGEQLLGPAELARLPRIAVTPLGITSVRFTGGEPLLARHLEEVVAAAAQLRPRPEISLTTNGVGLAKRAAALAEAGLDRVNVSLDTVDRAHFAAVTRRDRLTDVLDGLAGARAAGLTPVKVNAVLDPETGRQDVVELLRFCLEQGYQLRVIEQMPLDAGHQWRRNALLGSDDVLAALQPHFRLRPDPAPRGSAPAELWLVDAGPDTPAGKFGVIASVSHAFCSTCDRTRLTADGQVRSCLFSTEETDLRGLLRAGAGDEAIEAAWRGAMWAKPAGHGINNPDFLQPQRPMSAIGG.

Positions 1 to 31 are disordered; it reads MTVTALGVPTVRGRSEGSAVASDAPGDGPLL. Residues 33 to 251 form the Radical SAM core domain; the sequence is RFGRSATDLR…LQPHFRLRPD (219 aa). GTP is bound at residue R42. [4Fe-4S] cluster is bound by residues C49 and C53. Y55 contributes to the S-adenosyl-L-methionine binding site. C56 serves as a coordination point for [4Fe-4S] cluster. Position 93 (R93) interacts with GTP. Residue G97 coordinates S-adenosyl-L-methionine. Residue T124 coordinates GTP. S148 is a binding site for S-adenosyl-L-methionine. Position 185 (K185) interacts with GTP. An S-adenosyl-L-methionine-binding site is contributed by M219. The [4Fe-4S] cluster site is built by C287 and C290. A GTP-binding site is contributed by 292-294; sequence RTR. A [4Fe-4S] cluster-binding site is contributed by C304.

It belongs to the radical SAM superfamily. MoaA family. In terms of assembly, monomer and homodimer. It depends on [4Fe-4S] cluster as a cofactor.

The enzyme catalyses GTP + AH2 + S-adenosyl-L-methionine = (8S)-3',8-cyclo-7,8-dihydroguanosine 5'-triphosphate + 5'-deoxyadenosine + L-methionine + A + H(+). The protein operates within cofactor biosynthesis; molybdopterin biosynthesis. Its function is as follows. Catalyzes the cyclization of GTP to (8S)-3',8-cyclo-7,8-dihydroguanosine 5'-triphosphate. This is GTP 3',8-cyclase from Mycobacterium ulcerans (strain Agy99).